We begin with the raw amino-acid sequence, 206 residues long: 3-isopropylmalate dehydratase small subunit (206 aa).

The protein belongs to the LeuD family. LeuD type 1 subfamily. Heterodimer of LeuC and LeuD.

It carries out the reaction (2R,3S)-3-isopropylmalate = (2S)-2-isopropylmalate. It participates in amino-acid biosynthesis; L-leucine biosynthesis; L-leucine from 3-methyl-2-oxobutanoate: step 2/4. Its function is as follows. Catalyzes the isomerization between 2-isopropylmalate and 3-isopropylmalate, via the formation of 2-isopropylmaleate. In Leptospira interrogans serogroup Icterohaemorrhagiae serovar copenhageni (strain Fiocruz L1-130), this protein is 3-isopropylmalate dehydratase small subunit.